Here is a 547-residue protein sequence, read N- to C-terminus: Phosphomethylpyrimidine synthase (547 aa).

Residues Asn150, Met179, Tyr208, His244, 264–266, 305–308, and Glu344 each bind substrate; these read SRG and DGLR. Zn(2+) is bound at residue His348. Tyr371 contributes to the substrate binding site. His412 lines the Zn(2+) pocket. [4Fe-4S] cluster contacts are provided by Cys492, Cys495, and Cys500.

This sequence belongs to the ThiC family. The cofactor is [4Fe-4S] cluster.

It catalyses the reaction 5-amino-1-(5-phospho-beta-D-ribosyl)imidazole + S-adenosyl-L-methionine = 4-amino-2-methyl-5-(phosphooxymethyl)pyrimidine + CO + 5'-deoxyadenosine + formate + L-methionine + 3 H(+). The protein operates within cofactor biosynthesis; thiamine diphosphate biosynthesis. In terms of biological role, catalyzes the synthesis of the hydroxymethylpyrimidine phosphate (HMP-P) moiety of thiamine from aminoimidazole ribotide (AIR) in a radical S-adenosyl-L-methionine (SAM)-dependent reaction. In Nocardia farcinica (strain IFM 10152), this protein is Phosphomethylpyrimidine synthase.